The sequence spans 92 residues: DNA-directed RNA polymerase subunit omega (92 aa).

This sequence belongs to the RNA polymerase subunit omega family. As to quaternary structure, the RNAP catalytic core consists of 2 alpha, 1 beta, 1 beta' and 1 omega subunit. When a sigma factor is associated with the core the holoenzyme is formed, which can initiate transcription.

The enzyme catalyses RNA(n) + a ribonucleoside 5'-triphosphate = RNA(n+1) + diphosphate. Its function is as follows. Promotes RNA polymerase assembly. Latches the N- and C-terminal regions of the beta' subunit thereby facilitating its interaction with the beta and alpha subunits. This chain is DNA-directed RNA polymerase subunit omega, found in Shewanella denitrificans (strain OS217 / ATCC BAA-1090 / DSM 15013).